Consider the following 365-residue polypeptide: Mitogen-activated protein kinase HOG1A (365 aa).

The Protein kinase domain maps to 24-303; the sequence is YTDLQPVGMG…AADALAHPYL (280 aa). ATP is bound by residues 30 to 38 and Lys53; that span reads VGMGAFGLL. Asp145 functions as the Proton acceptor in the catalytic mechanism. Thr175 bears the Phosphothreonine mark. Residues 175–177 carry the TXY motif; the sequence is TGY. Tyr177 is modified (phosphotyrosine).

This sequence belongs to the protein kinase superfamily. Ser/Thr protein kinase family. MAP kinase subfamily. HOG1 sub-subfamily. Mg(2+) serves as cofactor. In terms of processing, phosphorylated. Dually phosphorylated on Thr-175 and Tyr-177, which activates the enzyme. Rapidly dephosphorylated upon either hypo- or hyperosmotic shock.

The protein localises to the cytoplasm. It is found in the nucleus. It carries out the reaction L-seryl-[protein] + ATP = O-phospho-L-seryl-[protein] + ADP + H(+). The enzyme catalyses L-threonyl-[protein] + ATP = O-phospho-L-threonyl-[protein] + ADP + H(+). Activated by tyrosine and threonine phosphorylation. Functionally, proline-directed serine/threonine-protein kinase involved in a signal transduction pathway that is activated by changes in the osmolarity of the extracellular environment. Controls osmotic regulation of transcription of target genes. The sequence is that of Mitogen-activated protein kinase HOG1A (HOG1A) from Wallemia ichthyophaga (strain EXF-994 / CBS 113033).